Reading from the N-terminus, the 210-residue chain is Large ribosomal subunit protein uL3 (210 aa).

Residues 133-156 (ASHGNSLSHRVPGSIGQNQTPGKV) form a disordered region. At Gln151 the chain carries N5-methylglutamine.

It belongs to the universal ribosomal protein uL3 family. In terms of assembly, part of the 50S ribosomal subunit. Forms a cluster with proteins L14 and L19. In terms of processing, methylated by PrmB.

Its function is as follows. One of the primary rRNA binding proteins, it binds directly near the 3'-end of the 23S rRNA, where it nucleates assembly of the 50S subunit. The chain is Large ribosomal subunit protein uL3 from Hamiltonella defensa subsp. Acyrthosiphon pisum (strain 5AT).